The primary structure comprises 317 residues: MHNYLDFEKPISDLEGKIIELKKLASEDESIDTTDEIGRLEVRVREAIVEIYSKLNAWQKTQVARHPQRPHFVDYAKTLFQEFTPLAGDRKFSEDAAIQAGLARFRGQPVAVIGQEKGNDTKSRLKHNFGSPRPEGYRKAIRILEMADRFGLPVISLVDTAGAYPGVGAEERGQAEAIARSTEMCLGVKVPLVSVVIGEGGSGGAIAIATGNRVYMLEHSIYSVISPEGAASILWRDSTRAREAATNMKITAEDLKSLGVIDGIISEPLGGAHRDPDSVIAATGDVIANALGEMASRSGEQLRNERRQKFLNMGRNL.

The CoA carboxyltransferase C-terminal domain maps to 40-293 (LEVRVREAIV…GDVIANALGE (254 aa)).

Belongs to the AccA family. As to quaternary structure, acetyl-CoA carboxylase is a heterohexamer composed of biotin carboxyl carrier protein (AccB), biotin carboxylase (AccC) and two subunits each of ACCase subunit alpha (AccA) and ACCase subunit beta (AccD).

The protein localises to the cytoplasm. It catalyses the reaction N(6)-carboxybiotinyl-L-lysyl-[protein] + acetyl-CoA = N(6)-biotinyl-L-lysyl-[protein] + malonyl-CoA. Its pathway is lipid metabolism; malonyl-CoA biosynthesis; malonyl-CoA from acetyl-CoA: step 1/1. Its function is as follows. Component of the acetyl coenzyme A carboxylase (ACC) complex. First, biotin carboxylase catalyzes the carboxylation of biotin on its carrier protein (BCCP) and then the CO(2) group is transferred by the carboxyltransferase to acetyl-CoA to form malonyl-CoA. The polypeptide is Acetyl-coenzyme A carboxylase carboxyl transferase subunit alpha (Rhizobium etli (strain ATCC 51251 / DSM 11541 / JCM 21823 / NBRC 15573 / CFN 42)).